The chain runs to 86 residues: Myosin light chain alkali (86 aa).

Residues 11–46 form the EF-hand domain; sequence GCYEDFIECLKLYDKEENGTMMLAELQHALLALGES.

In terms of assembly, myosin is a hexamer of 2 heavy chains and 4 light chains.

The protein is Myosin light chain alkali (Mlc1) of Drosophila subobscura (Fruit fly).